The primary structure comprises 326 residues: uncharacterized protein (326 aa).

Ser132 contributes to the substrate binding site. Tyr157 acts as the Proton acceptor in catalysis.

Belongs to the NAD(P)-dependent epimerase/dehydratase family. dTDP-glucose dehydratase subfamily.

This is an uncharacterized protein from Methanocaldococcus jannaschii (strain ATCC 43067 / DSM 2661 / JAL-1 / JCM 10045 / NBRC 100440) (Methanococcus jannaschii).